A 245-amino-acid chain; its full sequence is tRNA pseudouridine synthase A (245 aa).

The active-site Nucleophile is Asp52. A substrate-binding site is contributed by Tyr111.

Belongs to the tRNA pseudouridine synthase TruA family. In terms of assembly, homodimer.

It catalyses the reaction uridine(38/39/40) in tRNA = pseudouridine(38/39/40) in tRNA. In terms of biological role, formation of pseudouridine at positions 38, 39 and 40 in the anticodon stem and loop of transfer RNAs. The polypeptide is tRNA pseudouridine synthase A (Rhodopseudomonas palustris (strain HaA2)).